The primary structure comprises 98 residues: Cell cycle protein GpsB (98 aa).

The stretch at 34 to 71 (LDLIIKDYEAFQQEIDELRQENARLKRQVEELQKRPAM) forms a coiled coil.

Belongs to the GpsB family. In terms of assembly, forms polymers through the coiled coil domains. Interacts with PBP1, MreC and EzrA.

The protein resides in the cytoplasm. In terms of biological role, divisome component that associates with the complex late in its assembly, after the Z-ring is formed, and is dependent on DivIC and PBP2B for its recruitment to the divisome. Together with EzrA, is a key component of the system that regulates PBP1 localization during cell cycle progression. Its main role could be the removal of PBP1 from the cell pole after pole maturation is completed. Also contributes to the recruitment of PBP1 to the division complex. Not essential for septum formation. In Geobacillus kaustophilus (strain HTA426), this protein is Cell cycle protein GpsB.